Consider the following 139-residue polypeptide: Large ribosomal subunit protein uL16c (139 aa).

The protein belongs to the universal ribosomal protein uL16 family. Part of the 50S ribosomal subunit.

The protein localises to the plastid. Its subcellular location is the chloroplast. The chain is Large ribosomal subunit protein uL16c from Cicer arietinum (Chickpea).